The following is a 93-amino-acid chain: Integration host factor subunit beta (93 aa).

The protein belongs to the bacterial histone-like protein family. Heterodimer of an alpha and a beta chain.

Its function is as follows. This protein is one of the two subunits of integration host factor, a specific DNA-binding protein that functions in genetic recombination as well as in transcriptional and translational control. The protein is Integration host factor subunit beta of Aliivibrio fischeri (strain ATCC 700601 / ES114) (Vibrio fischeri).